Here is a 448-residue protein sequence, read N- to C-terminus: Glutamate--tRNA ligase 1 (448 aa).

The 'HIGH' region motif lies at 10-20; that stretch reads PSPTGMLHVGN. Residues 240 to 244 carry the 'KMSKS' region motif; the sequence is KISKR. Lys-243 is a binding site for ATP.

This sequence belongs to the class-I aminoacyl-tRNA synthetase family. Glutamate--tRNA ligase type 1 subfamily. Monomer.

The protein localises to the cytoplasm. The enzyme catalyses tRNA(Glu) + L-glutamate + ATP = L-glutamyl-tRNA(Glu) + AMP + diphosphate. Functionally, catalyzes the attachment of glutamate to tRNA(Glu) in a two-step reaction: glutamate is first activated by ATP to form Glu-AMP and then transferred to the acceptor end of tRNA(Glu). This Rickettsia typhi (strain ATCC VR-144 / Wilmington) protein is Glutamate--tRNA ligase 1.